Here is a 520-residue protein sequence, read N- to C-terminus: MTEISMLNDVQKIIVLDYGSQYNQLIARRIREFGVFSELKSHNITAQELRDINPIGIVLSGGPNSVYADDAFGIDPEIFELGIPILGICYGMQLITHTLGGKVVPAGQAGHREYGQSSLRLRSASALFAGTPDEQLVLMSHGDAVTEIPEGFHLVGDSNDCPYAAMENTKKRLYGIQFHPEVRHSVYGNDILKNFAISICGARGDWSMDNFIDMEIAKIRKTVGDRKVLLGLSGGVDSSVVGVLLQKAIGDQLTCIFVDHGLLRKNEGDQVMEMLGGRFGLNIIRVDASKRFLDLLAGVEDPEKKRKIIGNEFVYVFDDEASKLEGVDFLAQGTLYTDIIESGTETAQTIKSHHNVGGLPEDMQFELIEPLNTLFKDEVRALGTALGMPDEVVWRQPFPGPGLAIRIMGEITAEKLETVRESDAILREEIAKAGLDRDVWQYFTVNTGVRSVGVMGDGRTYDYTIAIRAITSIDGMTADFAQLPWEVLKKISVRIVNEVDHVNRIVYDITSKPPATVEWE.

In terms of domain architecture, Glutamine amidotransferase type-1 spans 12–205 (KIIVLDYGSQ…AISICGARGD (194 aa)). The Nucleophile role is filled by cysteine 89. Active-site residues include histidine 179 and glutamate 181. Residues 206–395 (WSMDNFIDME…LGMPDEVVWR (190 aa)) form the GMPS ATP-PPase domain. 233-239 (SGGVDSS) lines the ATP pocket.

In terms of assembly, homodimer.

The enzyme catalyses XMP + L-glutamine + ATP + H2O = GMP + L-glutamate + AMP + diphosphate + 2 H(+). The protein operates within purine metabolism; GMP biosynthesis; GMP from XMP (L-Gln route): step 1/1. Functionally, catalyzes the synthesis of GMP from XMP. This chain is GMP synthase [glutamine-hydrolyzing], found in Streptococcus equi subsp. zooepidemicus (strain H70).